Here is a 641-residue protein sequence, read N- to C-terminus: Tetracycline resistance protein TetQ (641 aa).

The tr-type G domain occupies 1 to 244 (MNIINLGILA…AITSFILPPA (244 aa)). GTP contacts are provided by residues 10–17 (AHIDAGKT), 74–78 (DTPGH), and 128–131 (NKID).

It belongs to the TRAFAC class translation factor GTPase superfamily. Classic translation factor GTPase family. TetM/TetO subfamily.

Its function is as follows. Abolishes the inhibitory effect of tetracyclin on protein synthesis by a non-covalent modification of the ribosomes. The sequence is that of Tetracycline resistance protein TetQ (tetQ) from Bacteroides thetaiotaomicron.